The chain runs to 188 residues: Elongation factor P-like protein (188 aa).

Belongs to the elongation factor P family.

The polypeptide is Elongation factor P-like protein (Marinobacter nauticus (strain ATCC 700491 / DSM 11845 / VT8) (Marinobacter aquaeolei)).